We begin with the raw amino-acid sequence, 186 residues long: Small ribosomal subunit protein uS7 (186 aa).

Belongs to the universal ribosomal protein uS7 family. Part of the 30S ribosomal subunit.

In terms of biological role, one of the primary rRNA binding proteins, it binds directly to 16S rRNA where it nucleates assembly of the head domain of the 30S subunit. Is located at the subunit interface close to the decoding center. This Methanothermobacter thermautotrophicus (strain ATCC 29096 / DSM 1053 / JCM 10044 / NBRC 100330 / Delta H) (Methanobacterium thermoautotrophicum) protein is Small ribosomal subunit protein uS7.